The sequence spans 228 residues: Ribose-5-phosphate isomerase A (228 aa).

Residues 26-29 (SGST), 81-84 (DGAD), and 94-97 (KGGG) contribute to the substrate site. E103 (proton acceptor) is an active-site residue. K121 is a substrate binding site.

It belongs to the ribose 5-phosphate isomerase family. As to quaternary structure, homodimer.

The catalysed reaction is aldehydo-D-ribose 5-phosphate = D-ribulose 5-phosphate. The protein operates within carbohydrate degradation; pentose phosphate pathway; D-ribose 5-phosphate from D-ribulose 5-phosphate (non-oxidative stage): step 1/1. Catalyzes the reversible conversion of ribose-5-phosphate to ribulose 5-phosphate. The chain is Ribose-5-phosphate isomerase A from Shouchella clausii (strain KSM-K16) (Alkalihalobacillus clausii).